Consider the following 335-residue polypeptide: 7,8-didemethyl-8-hydroxy-5-deazariboflavin synthase (335 aa).

Positions 1–246 (MTYSKNVFIP…QVAPNLIDPK (246 aa)) constitute a Radical SAM core domain. Positions 15, 19, and 22 each coordinate [4Fe-4S] cluster.

This sequence belongs to the radical SAM superfamily. CofG family. In terms of assembly, consists of two subunits, CofG and CofH. The cofactor is [4Fe-4S] cluster.

The enzyme catalyses 5-amino-5-(4-hydroxybenzyl)-6-(D-ribitylimino)-5,6-dihydrouracil + S-adenosyl-L-methionine = 7,8-didemethyl-8-hydroxy-5-deazariboflavin + 5'-deoxyadenosine + L-methionine + NH4(+) + H(+). It functions in the pathway cofactor biosynthesis; coenzyme F0 biosynthesis. In terms of biological role, catalyzes the radical-mediated synthesis of 7,8-didemethyl-8-hydroxy-5-deazariboflavin from 5-amino-5-(4-hydroxybenzyl)-6-(D-ribitylimino)-5,6-dihydrouracil. The polypeptide is 7,8-didemethyl-8-hydroxy-5-deazariboflavin synthase (Methanosarcina mazei (strain ATCC BAA-159 / DSM 3647 / Goe1 / Go1 / JCM 11833 / OCM 88) (Methanosarcina frisia)).